The chain runs to 424 residues: UDP-N-acetylglucosamine 1-carboxyvinyltransferase (424 aa).

22–23 serves as a coordination point for phosphoenolpyruvate; sequence KN. Arg-93 is a UDP-N-acetyl-alpha-D-glucosamine binding site. Catalysis depends on Cys-117, which acts as the Proton donor. At Cys-117 the chain carries 2-(S-cysteinyl)pyruvic acid O-phosphothioketal. Residues 122 to 126, 162 to 165, Asp-307, and Ile-329 contribute to the UDP-N-acetyl-alpha-D-glucosamine site; these read RPVDL and KVSV.

It belongs to the EPSP synthase family. MurA subfamily.

The protein resides in the cytoplasm. It catalyses the reaction phosphoenolpyruvate + UDP-N-acetyl-alpha-D-glucosamine = UDP-N-acetyl-3-O-(1-carboxyvinyl)-alpha-D-glucosamine + phosphate. It participates in cell wall biogenesis; peptidoglycan biosynthesis. Its function is as follows. Cell wall formation. Adds enolpyruvyl to UDP-N-acetylglucosamine. This Haemophilus influenzae (strain 86-028NP) protein is UDP-N-acetylglucosamine 1-carboxyvinyltransferase.